We begin with the raw amino-acid sequence, 1721 residues long: Intersectin-1 (1721 aa).

Residues 21 to 109 (ERAKHDQQFH…PVMKQQPVAI (89 aa)) form the EH 1 domain. One can recognise an EF-hand 1 domain in the interval 53 to 88 (LPQPVLAQIWALADMNNDGRMDQVEFSIAMKLIKLK). Residues aspartate 66, asparagine 68, aspartate 70, arginine 72, and glutamate 77 each contribute to the Ca(2+) site. Serine 203 is modified (phosphoserine). Positions 221-310 (SRLKYRQLFN…PEYIPPSFRR (90 aa)) constitute an EH 2 domain. The 36-residue stretch at 254 to 289 (LPQAQLASIWNLSDIDQDGKLTAEEFILAMHLIDVA) folds into the EF-hand 2 domain. 5 residues coordinate Ca(2+): aspartate 267, aspartate 269, aspartate 271, lysine 273, and glutamate 278. Phosphoserine is present on serine 318. Disordered regions lie at residues 322–348 (STSV…KLPV) and 650–701 (QRRA…KQEA). Residues 326–702 (DQRLPEEPVL…GEEKGKQEAQ (377 aa)) are KLERQ. Positions 355–659 (RENFERGNLE…QRRAQERDKQ (305 aa)) form a coiled coil. Serine 687 is subject to Phosphoserine. The SH3 1 domain occupies 740 to 806 (VKVVYYRALY…PANYAEKIPE (67 aa)). The disordered stretch occupies residues 836–868 (LAVTSSEPSTTPNNWADFSSTWPTSTNEKPETD). Positions 838-862 (VTSSEPSTTPNNWADFSSTWPTSTN) are enriched in polar residues. Threonine 897 carries the phosphothreonine modification. Serine 901, serine 902, and serine 904 each carry phosphoserine. Positions 913–971 (VEGLQAQALYPWRAKKDNHLNFNKNDVITVLEQQDMWWFGEVQGQKGWFPKSYVKLISG) constitute an SH3 2 domain. 3 positions are modified to phosphoserine: serine 978, serine 986, and serine 995. SH3 domains follow at residues 1002-1060 (VSGE…LKDS) and 1074-1138 (KKPE…LLSP). Residues 1074–1138 (KKPEIAQVIA…PANYVKLLSP (65 aa)) form a required for interaction with FCHSD2 region. A Bipartite nuclear localization signal; in isoform 2 motif is present at residues 1104-1127 (RKKNPGGWWEGELQARGKKRQIGW). Serine 1137 is subject to Phosphoserine. At threonine 1144 the chain carries Phosphothreonine. The region spanning 1155–1214 (AAVCQVIGMYDYTAQNDDELAFNKGQIINVLNKEDPDWWKGEVNGQVGLFPSNYVKLTTD) is the SH3 5 domain. One can recognise a DH domain in the interval 1237–1423 (KRQGYIHELI…EELCSQVNEG (187 aa)). A PH domain is found at 1462 to 1571 (KFLHSGKLYK…WVQKIKAASE (110 aa)). A C2 domain is found at 1579–1695 (KKREKAYLVR…KKDQGSKGPV (117 aa)). Serine 1645 is modified (phosphoserine). Residues aspartate 1667, serine 1670, and aspartate 1673 each coordinate Ca(2+).

In terms of assembly, interacts (via DH domain) with CDC42. Interacts (via SH3 domain 1) with WASL. Interacts with dynamin, SNAP25 and SNAP23. Interacts with clathrin-associated proteins and other components of the endocytic machinery, such as SPIN90, EPS15, EPN1, EPN2, STON2, FCHO1, FCHO2 and DAB2. Interacts (via SH3 domains) with REPS1 and SGIP1. Interacts with ARHGAP31. Interacts with ADAM15. Interacts with PRRT2. Interacts (via SH3 domain 4) with FCHSD2 (via SH3 domain 2). Interacts (via SH3 domain 1) with DENND2B. Interacts (via SH3 domains) with CBL. Isoform 2: Interacts with CBL and DNM1. Isoform 2: Interacts with LMNA. Isoform 2: Interacts with importin subunit KPNA1; this is likely to mediate its import into the nucleus. Interacts with DNM2. As to quaternary structure, (Microbial infection) Interacts with vaccinia virus protein A36. Ca(2+) serves as cofactor. As to expression, isoform 1 is expressed almost exclusively in the brain. Isoform 2 is detected in brain, spleen, lung, liver, heart, skeletal muscle and kidney. Isoform 5 is primarily expressed in brain, spleen, lung and kidney (at protein level). Isoform 1 and isoform 2 are detected in brain. Isoform 2 is ubiquitous in adult and fetal tissues with high expression in skeletal muscle, heart, spleen, ovary, testis and all fetal tissues tested and low expression in thymus, blood, lung, liver and pancreas. Isoform 1 is expressed almost exclusively in the brain, in all brain regions. Not expressed in the spinal cord.

It is found in the endomembrane system. The protein resides in the synapse. Its subcellular location is the synaptosome. It localises to the cell projection. The protein localises to the lamellipodium. It is found in the cell membrane. The protein resides in the membrane. Its subcellular location is the clathrin-coated pit. It localises to the recycling endosome. The protein localises to the endosome. It is found in the cytoplasmic vesicle. The protein resides in the cytoplasm. Its subcellular location is the nucleus envelope. Adapter protein that provides a link between the endocytic membrane traffic and the actin assembly machinery. Acts as a guanine nucleotide exchange factor (GEF) for CDC42, and thereby stimulates actin nucleation mediated by WASL and the ARP2/3 complex. Plays a role in the assembly and maturation of clathrin-coated vesicles. Recruits FCHSD2 to clathrin-coated pits. Involved in endocytosis of activated EGFR, and probably also other growth factor receptors. Involved in endocytosis of integrin beta-1 (ITGB1) and transferrin receptor (TFR); internalization of ITGB1 as DAB2-dependent cargo but not TFR may involve association with DAB2. Promotes ubiquitination and subsequent degradation of EGFR, and thereby contributes to the down-regulation of EGFR-dependent signaling pathways. In chromaffin cells, required for normal exocytosis of catecholamines. Required for rapid replenishment of release-ready synaptic vesicles at presynaptic active zones. Inhibits ARHGAP31 activity toward RAC1. Functionally, plays a role in synaptic vesicle endocytosis in brain neurons. This Homo sapiens (Human) protein is Intersectin-1.